The sequence spans 91 residues: Non-hemolytic enterotoxin 105 kDa component (91 aa).

Zn(2+) is required as a cofactor.

It localises to the secreted. Functionally, this protein is a metalloprotease with gelatinolytic and collagenolytic activity and is a component of the non-hemolytic enterotoxin complex (NHE). This Bacillus cereus protein is Non-hemolytic enterotoxin 105 kDa component.